Consider the following 1331-residue polypeptide: Alpha,alpha-trehalose-phosphate synthase [UDP-forming] 1 (1331 aa).

The span at 1 to 13 (MTDTATGVHSNAN) shows a compositional bias: polar residues. Disordered regions lie at residues 1-50 (MTDT…DNDP), 71-118 (TGKE…SGQL), and 1312-1331 (PMDQ…SFGN). Positions 39-50 (DPFDRPKNDNDP) are enriched in basic and acidic residues. A compositionally biased stretch (acidic residues) spans 77-98 (LDESDDMTENEDHDEMANEDDG). Positions 102–112 (NEKKVETRKMD) are enriched in basic and acidic residues. The segment covering 1318 to 1331 (SSTLGASLGTSFGN) has biased composition (polar residues).

In the N-terminal section; belongs to the glycosyltransferase 20 family. The protein in the C-terminal section; belongs to the gob-1 trehalose phosphatase family.

It carries out the reaction D-glucose 6-phosphate + UDP-alpha-D-glucose = alpha,alpha-trehalose 6-phosphate + UDP + H(+). Catalyzes the production of trehalose from glucose-6-phosphate and UDP-alpha-D-glucose in a 2 step process. In Caenorhabditis elegans, this protein is Alpha,alpha-trehalose-phosphate synthase [UDP-forming] 1 (tps-1).